The following is a 1080-amino-acid chain: Ubiquitin carboxyl-terminal hydrolase 8 (1080 aa).

The region spanning T33–A116 is the MIT domain. The span at R119–E173 shows a compositional bias: basic and acidic residues. Residues R119–A176 form a disordered region. Residue S160 is modified to Phosphoserine. Positions K195–T313 constitute a Rhodanese domain. Positions A379 to P393 are enriched in low complexity. Disordered regions lie at residues A379–E455, E468–E605, and P642–C710. The residue at position 392 (S392) is a Phosphoserine. The short motif at P405–P413 is the SH3-binding element. Residues L417–N427 show a composition bias toward basic and acidic residues. S446 is modified (phosphoserine). Composition is skewed to basic and acidic residues over residues E468–S535, S549–A577, and A593–E605. T569 carries the post-translational modification Phosphothreonine. A compositionally biased stretch (polar residues) spans S678 to L688. S680 and S681 each carry phosphoserine. A USP domain is found at T739–L1071. C748 serves as the catalytic Nucleophile. T907 carries the phosphothreonine modification. H1029 serves as the catalytic Proton acceptor.

This sequence belongs to the peptidase C19 family. In terms of assembly, forms a ternary complex with RNF128 and OTUB1. Interacts (via C-terminal UCH catalytic domain) with OTUB1 isoform 1. Interacts with STAM2 (via SH3 domain). Interacts with DNAJB3, EGFR, EPS15, RASGRF1, RNF41, YWHAE, YWHAG and YWHAZ. Interacts with NBR1, RASGRF1, RNF41 and IST1. Associates with the ESCRT-0 complex and with microtubules. Interacts with BIRC6/bruce and KIF23/MKLP1. In terms of processing, phosphorylation of Ser-680 is essential for interaction with YWHAE and for cytosol localization. Undergoes dephosphorylation at Ser-680 in the M phase. Tyrosine-phosphorylated in its N-terminal half in an EGFR-dependent manner. Ubiquitinated. Inactive form is mostly monoubiquitinated, but polyubiquitination happens too. Ubiquitination is increased in EGF-stimulated cells. Ubiquitination of active form is undetectable, suggesting a possibility that USP8 deubiquitinates itself, thereby regulating its own function. Highly expressed in testis. Expressed at intermediate level in brain.

It localises to the cytoplasm. It is found in the nucleus. The protein localises to the endosome membrane. The protein resides in the cell membrane. It catalyses the reaction Thiol-dependent hydrolysis of ester, thioester, amide, peptide and isopeptide bonds formed by the C-terminal Gly of ubiquitin (a 76-residue protein attached to proteins as an intracellular targeting signal).. Hydrolase that can remove conjugated ubiquitin from proteins and therefore plays an important regulatory role at the level of protein turnover by preventing degradation. Converts both 'Lys-48' an 'Lys-63'-linked ubiquitin chains. Catalytic activity is enhanced in the M phase. Involved in cell proliferation. Required to enter into S phase in response to serum stimulation. May regulate T-cell anergy mediated by RNF128 via the formation of a complex containing RNF128 and OTUB1. Probably regulates the stability of STAM2 and RASGRF1. Regulates endosomal ubiquitin dynamics, cargo sorting, membrane traffic at early endosomes, and maintenance of ESCRT-0 stability. The level of protein ubiquitination on endosomes is essential for maintaining the morphology of the organelle. Deubiquitinates EPS15 and controls tyrosine kinase stability. Removes conjugated ubiquitin from EGFR thus regulating EGFR degradation and downstream MAPK signaling. Involved in acrosome biogenesis through interaction with the spermatid ESCRT-0 complex and microtubules. Deubiquitinates BIRC6/bruce and KIF23/MKLP1. Deubiquitinates BACE1 which inhibits BACE1 lysosomal degradation and modulates BACE-mediated APP cleavage and amyloid-beta formation. This Mus musculus (Mouse) protein is Ubiquitin carboxyl-terminal hydrolase 8.